We begin with the raw amino-acid sequence, 1759 residues long: MDCKENGVGDASGCNIDANSLASNLAMNTNEDFYEKLSSRGQNLDSVSSLEIPQTASSVNHTIEGQRKCFTEIEQMGYGNSNSQEDAGNTDDDLYVCYNADDTQEQGVVSGELEQSQELICDTDLLVNCNKLDDGKESQDTNVSLVSIFSGSMQEKEAPQAKEDEGYGGTTLPIGGSGIDTESTFVNDAPEQFESLETTKHIKPDEVESDGISYRFDDGGKEGRNGPSSDLDTGSSDDISLSQSFSFPDSLLDSSVFGCSATESYLEDAIDIEGNGTIVVSPSLAITEMLNNDDGGLCSHDLNKITVTETINPDLKLVREDRLDTDLSVMNEKMLKNHVGDSSSESAVAALSMNNGMAADLRAENFSQSSPIDEKTLDMEANSPITDSSLIWNFPLNFGSGGIEVCNPENAVEPLRIVDDNGRIGGEVASASGSDFCEAGMSSSRRKARDGKQCKVVQTKTSARHLRKSSRKKQSERDIESIFKCSKQKRSSLLKTSRSSEWGLPSKTTEIFLQSNNIPYDGPPHHEPQRSQGNLNNGEHNRSSHNGNVEGSNRNIQASSGSCLRLKVKFGKSGGQNPLNITVSKVSGNSLPGNGIVKAGTCLELPGSAHFGEDKMQTVETKEDLVEKSNPVEKVSYLQSSDSMRDKKYNQDAGGLCRKVGGDVLDDDPHLSSIRMVEECERATGTQSLDAETSPDSEVINSVPDSIVNIEHKEGLHHGFFSTPEDVVKKNRVLEKEDELRASKSPSENGSHLIPNAKKAKHPKSKSNGTKKGKSKFSESAKDGRKNESHEGVEQRKSLNTSMGRDDSDYPEVGRIESHKTTGALLDADIGKTSATYGTISSDVTHGEMVVDVTIEDSYSTESAWVRCDDCFKWRRIPASVVGSIDESSRWICMNNSDKRFADCSKSQEMSNEEINEELGIGQDEADAYDCDAAKRGKEKEQKSKRLTGKQKACFKAIKTNQFLHRNRKSQTIDEIMVCHCKPSPDGRLGCGEECLNRMLNIECLQGTCPAGDLCSNQQFQKRKYVKFERFQSGKKGYGLRLLEDVREGQFLIEYVGEVLDMQSYETRQKEYAFKGQKHFYFMTLNGNEVIDAGAKGNLGRFINHSCEPNCRTEKWMVNGEICVGIFSMQDLKKGQELTFDYNYVRVFGAAAKKCYCGSSHCRGYIGGDPLNGDVIIQSDSDEEYPELVILDDDESGEGILGATSRTFTDDADEQMPQSFEKVNGYKDLAPDNTQTQSSVSVKLPEREIPPPLLQPTEVLKELSSGISITAVQQEVPAEKKTKSTSPTSSSLSRMSPGGTNSDKTTKHGSGEDKKILPRPRPRMKTSRSSESSKRDKGGIYPGVNKAQVIPVNKLQQQPIKSKGSEKVSPSIETFEGKLNELLDAVGGISKRRDSAKGYLKLLLLTAASRGTDEEGIYSNRDLSMILDALLKTKSKSVLVDIINKNGPFAGMESFKDSVLSFTEHDDYTVHNIARSFRDRWIPKHFRKPWRINREERSESMRSPINRRFRASQEPRYDHQSPRPAEPAASVTSSKAATPETASVSEGYSEPNSGLPETNGRKRKSRWDQPSKTKEQRIMTILSQQTDETNGNQDVQDDLPPGFSSPCTDVPDAITAQPQQKFLSRLPVSYGIPLSIVHQFGSPGKEDPTTWSVAPGMPFYPFPPLPPVSHGEFFAKRNVRACSSSMGNLTYSNEILPATPVTDSTAPTRKRELFSSDIGTTYFRQQKQSVPPWLRNNGGEKTANSPIPGNLTLEKKLNS.

3 stretches are compositionally biased toward basic and acidic residues: residues Gln154–Glu165, Glu197–Glu206, and Arg215–Arg224. Disordered stretches follow at residues Gln154–Thr181, Glu197–Asp237, Cys437–Ile482, Ser515–Ile556, and Asp738–Ile816. Residues Ser462 to Lys472 are compositionally biased toward basic residues. Residues Arg530–Ile556 show a composition bias toward polar residues. A compositionally biased stretch (basic residues) spans Lys758 to Ser775. Composition is skewed to basic and acidic residues over residues Lys776 to Lys797 and Gly804 to Ile816. The segment at Tyr859–Asn912 adopts a CW-type zinc-finger fold. Residues Cys868, Cys871, Cys893, and Cys904 each contribute to the Zn(2+) site. An AWS domain is found at Asp974 to Lys1024. The 118-residue stretch at Val1026 to Asn1143 folds into the SET domain. S-adenosyl-L-methionine is bound at residue Tyr1142. One can recognise a Post-SET domain in the interval Ala1151 to Gly1167. Disordered regions lie at residues Gly1225–Leu1253, Ala1271–Asn1345, Glu1496–Pro1606, and Lys1727–Ser1759. Polar residues predominate over residues Asp1232–Ser1241. Positions Ser1284–Ser1293 are enriched in low complexity. The span at Lys1304–Ile1316 shows a compositional bias: basic and acidic residues. The span at Leu1317–Thr1326 shows a compositional bias: basic residues. Positions Ala1511–Ser1521 are enriched in basic and acidic residues. Residues Ser1530–Pro1556 are compositionally biased toward polar residues. A compositionally biased stretch (basic and acidic residues) spans Arg1566 to Arg1577. The span at Ile1581–Asp1594 shows a compositional bias: polar residues.

The protein belongs to the class V-like SAM-binding methyltransferase superfamily. Histone-lysine methyltransferase family. SET2 subfamily. In terms of assembly, interacts with FRI and SUF4, two components of the transcription activator complex FRI-C, and with SWC6, a component of the SWR1 chromatin-remodeling complex. Interacts with BZR2/BES1 and IWS1. Ubiquitous, with higher levels in young tissues, including shoot and root apex. Expressed in ovules, tapetum layer and microspores.

Its subcellular location is the nucleus. It is found in the chromosome. The protein resides in the centromere. It carries out the reaction N(6)-methyl-L-lysyl(36)-[histone H3] + S-adenosyl-L-methionine = N(6),N(6)-dimethyl-L-lysyl(36)-[histone H3] + S-adenosyl-L-homocysteine + H(+). The enzyme catalyses N(6),N(6)-dimethyl-L-lysyl(36)-[histone H3] + S-adenosyl-L-methionine = N(6),N(6),N(6)-trimethyl-L-lysyl(36)-[histone H3] + S-adenosyl-L-homocysteine + H(+). Histone methyltransferase involved in di and tri-methylation of 'Lys-36' of histone H3 (H3K36me2 and H3K36me3). Binds to H3 already mono- or di-methylated on 'Lys-4'(H3K4me1 or H3K4me2), but not to H3K4me3. H3K4me and H3K36me represent specific tags for epigenetic transcriptional activation. Positively regulates FLC transcription to prevent early flowering transition. Required for flowering transition in response to vernalization and for the maintenance of FLC expression in late embryos, but dispensable for the initial reactivation in early embryos during reprogramming. Also seems to modulate several traits including floral organ size, root size and dormancy. Promotes apical dominance. Directly involved in the tri-methylation of 'Lys-36' of histone H3 (H3K36me3) at LAZ5 chromatin to maintain a transcriptionally active state of LAZ5, a TIR-NB-LRR protein involved in innate immunity. Required for brassinosteroid (BR)-induced gene expression and histone H3 trimethylation on 'Lys-36' (H3K36me3) in BR-regulated genes. The chain is Histone-lysine N-methyltransferase ASHH2 from Arabidopsis thaliana (Mouse-ear cress).